The sequence spans 554 residues: Hydroxylamine reductase (554 aa).

Cysteine 3, cysteine 6, cysteine 18, and cysteine 25 together coordinate [2Fe-2S] cluster. Hybrid [4Fe-2O-2S] cluster contacts are provided by histidine 252, glutamate 276, cysteine 320, cysteine 408, cysteine 436, cysteine 461, glutamate 495, and lysine 497. The residue at position 408 (cysteine 408) is a Cysteine persulfide.

It belongs to the HCP family. It depends on [2Fe-2S] cluster as a cofactor. The cofactor is hybrid [4Fe-2O-2S] cluster.

It is found in the cytoplasm. The enzyme catalyses A + NH4(+) + H2O = hydroxylamine + AH2 + H(+). Its function is as follows. Catalyzes the reduction of hydroxylamine to form NH(3) and H(2)O. This is Hydroxylamine reductase from Shewanella baltica (strain OS223).